Reading from the N-terminus, the 81-residue chain is Exodeoxyribonuclease 7 small subunit (81 aa).

The protein belongs to the XseB family. As to quaternary structure, heterooligomer composed of large and small subunits.

It is found in the cytoplasm. The enzyme catalyses Exonucleolytic cleavage in either 5'- to 3'- or 3'- to 5'-direction to yield nucleoside 5'-phosphates.. Bidirectionally degrades single-stranded DNA into large acid-insoluble oligonucleotides, which are then degraded further into small acid-soluble oligonucleotides. This chain is Exodeoxyribonuclease 7 small subunit, found in Pasteurella multocida (strain Pm70).